We begin with the raw amino-acid sequence, 369 residues long: Secondary metabolism regulator laeA (369 aa).

A disordered region spans residues 1 to 37; sequence MFGNGQTGQRLPAMASPPHDSYYSQSLASSRSRNNSD. Residues 20 to 37 are compositionally biased toward low complexity; sequence DSYYSQSLASSRSRNNSD.

This sequence belongs to the methyltransferase superfamily. LaeA methyltransferase family. As to quaternary structure, component of the heterotrimeric velvet complex composed of laeA, veA and velB; VeA acting as a bridging protein between laeA and velB. Interacts directly with veA.

Its subcellular location is the nucleus. The catalysed reaction is L-methionyl-[protein] + S-adenosyl-L-methionine = S-methyl-L-methionyl-[protein] + S-adenosyl-L-homocysteine. Its function is as follows. Methyltransferase that performs automethylation. No other methyl-accepting substrate has been identified yet. Component of the velvet transcription factor complex that acts as a global regulator for secondary metabolite gene expression. Required for aflR expression and subsequent aflatoxin production. Negatively regulates veA expression. Controls conidiophore and conidial development. Required for hydrophobin production which plays a role in cell surface hydrophobicity and host defense escape. This chain is Secondary metabolism regulator laeA, found in Aspergillus flavus (strain ATCC 200026 / FGSC A1120 / IAM 13836 / NRRL 3357 / JCM 12722 / SRRC 167).